Reading from the N-terminus, the 38-residue chain is Large ribosomal subunit protein bL36 (38 aa).

The protein belongs to the bacterial ribosomal protein bL36 family.

This Streptococcus pneumoniae serotype 4 (strain ATCC BAA-334 / TIGR4) protein is Large ribosomal subunit protein bL36 (rpmJ).